Consider the following 206-residue polypeptide: MTPMQEQLVALGAVFEAAVLADKIARTGQVSEASMSCMLGSLLVRDPQTTLDVYGGDDLNLRDGYRALISSLERNPSALQREPLRYSLAMIGLERQLDKRSDMLQVMGSRLDQIQQQVEHFGLVHDNVIAACGGLYQDTISTFRQRIQVHGDMRFLQQPNNAAKIRALLLAGIRSARLWRQLGGHRWQLVFSRGKLLKALYDMTRN.

The protein belongs to the HflD family.

The protein resides in the cytoplasm. The protein localises to the cell inner membrane. This is High frequency lysogenization protein HflD homolog from Ectopseudomonas mendocina (strain ymp) (Pseudomonas mendocina).